The chain runs to 141 residues: Glutamyl-tRNA(Gln) amidotransferase subunit C, chloroplastic/mitochondrial (141 aa).

Belongs to the GatC family. Subunit of the heterotrimeric GatCAB amidotransferase (AdT) complex, composed of A, B and C subunits.

It localises to the mitochondrion. The protein localises to the plastid. It is found in the chloroplast. It catalyses the reaction L-glutamyl-tRNA(Gln) + L-glutamine + ATP + H2O = L-glutaminyl-tRNA(Gln) + L-glutamate + ADP + phosphate + H(+). In terms of biological role, allows the formation of correctly charged Gln-tRNA(Gln) through the transamidation of misacylated Glu-tRNA(Gln) in chloroplasts and mitochondria. The reaction takes place in the presence of glutamine and ATP through an activated gamma-phospho-Glu-tRNA(Gln). The protein is Glutamyl-tRNA(Gln) amidotransferase subunit C, chloroplastic/mitochondrial of Populus trichocarpa (Western balsam poplar).